A 669-amino-acid polypeptide reads, in one-letter code: Polyamine deacetylase HDAC10 (669 aa).

The segment at 1–323 is histone deacetylase; the sequence is MGTALVYHED…VCMTVQTLLG (323 aa). A substrate-binding site is contributed by Asp20. Positions 21–24 match the Substrate specificity motif; that stretch reads PECE. The Proton donor/acceptor role is filled by His135. Residues Asp172, His174, and Asp265 each coordinate Zn(2+). Tyr305 lines the substrate pocket. Positions 361–373 are enriched in polar residues; the sequence is DVTAVPMSPSSHS. Residues 361–387 form a disordered region; sequence DVTAVPMSPSSHSPEGRPPPLLPGGPV. Residue Ser393 is modified to Phosphoserine.

It belongs to the histone deacetylase family. HD type 2 subfamily. In terms of assembly, interacts with HDAC3. Interacts with HDAC2 and NCOR2/SMRT. Interacts with HSPA8/HSC70. Interacts with MSH2. Widely expressed with high levels in liver and kidney.

The protein resides in the cytoplasm. The protein localises to the nucleus. It catalyses the reaction N(8)-acetylspermidine + H2O = spermidine + acetate. It carries out the reaction N-acetylputrescine + H2O = putrescine + acetate. The catalysed reaction is N-acetylcadaverine + H2O = cadaverine + acetate. The enzyme catalyses N(6)-acetyl-L-lysyl-[protein] + H2O = L-lysyl-[protein] + acetate. Functionally, polyamine deacetylase (PDAC), which acts preferentially on N(8)-acetylspermidine, and also on acetylcadaverine and acetylputrescine. Exhibits attenuated catalytic activity toward N(1),N(8)-diacetylspermidine and very low activity, if any, toward N(1)-acetylspermidine. Histone deacetylase activity has been observed in vitro. Has also been shown to be involved in MSH2 deacetylation. The physiological relevance of protein/histone deacetylase activity is unclear and could be very weak. May play a role in the promotion of late stages of autophagy, possibly autophagosome-lysosome fusion and/or lysosomal exocytosis in neuroblastoma cells. May play a role in homologous recombination. May promote DNA mismatch repair. This chain is Polyamine deacetylase HDAC10 (HDAC10), found in Homo sapiens (Human).